The primary structure comprises 356 residues: tRNA N6-adenosine threonylcarbamoyltransferase (356 aa).

Histidine 115 and histidine 119 together coordinate Fe cation. Residues 138–142, aspartate 171, glycine 184, and asparagine 277 contribute to the substrate site; that span reads LVSGG. Fe cation is bound at residue aspartate 305.

Belongs to the KAE1 / TsaD family. Fe(2+) serves as cofactor.

The protein localises to the cytoplasm. The enzyme catalyses L-threonylcarbamoyladenylate + adenosine(37) in tRNA = N(6)-L-threonylcarbamoyladenosine(37) in tRNA + AMP + H(+). Its function is as follows. Required for the formation of a threonylcarbamoyl group on adenosine at position 37 (t(6)A37) in tRNAs that read codons beginning with adenine. Is involved in the transfer of the threonylcarbamoyl moiety of threonylcarbamoyl-AMP (TC-AMP) to the N6 group of A37, together with TsaE and TsaB. TsaD likely plays a direct catalytic role in this reaction. The polypeptide is tRNA N6-adenosine threonylcarbamoyltransferase (Polaromonas naphthalenivorans (strain CJ2)).